Here is a 171-residue protein sequence, read N- to C-terminus: Cation channel sperm-associated auxiliary subunit TMEM249 (171 aa).

The Cytoplasmic portion of the chain corresponds to 1-2 (ML). The chain crosses the membrane as a helical span at residues 3-17 (FIICLVFISCNVLRE). Residues 18–28 (VKYQETWCFPA) lie on the Extracellular side of the membrane. The chain crosses the membrane as a helical span at residues 29 to 40 (YGMVIGLWLMLS). At 41-171 (SIPQRRLVLN…TKSSVNDLDV (131 aa)) the chain is on the cytoplasmic side.

In terms of assembly, component of the CatSper complex or CatSpermasome composed of the core pore-forming members CATSPER1, CATSPER2, CATSPER3 and CATSPER4 as well as auxiliary members CATSPERB, CATSPERG2, CATSPERD, CATSPERE, CATSPERZ, C2CD6/CATSPERT, SLCO6C1, TMEM249, TMEM262 and EFCAB9. HSPA1 may be an additional auxiliary complex member. The core complex members CATSPER1, CATSPER2, CATSPER3 and CATSPER4 form a heterotetrameric channel. The auxiliary CATSPERB, CATSPERG2, CATSPERD and CATSPERE subunits form a pavilion-like structure over the pore which stabilizes the complex through interactions with CATSPER4, CATSPER3, CATSPER1 and CATSPER2 respectively. SLCO6C1 interacts with CATSPERE and TMEM262/CATSPERH interacts with CATSPERB, further stabilizing the complex. C2CD6/CATSPERT interacts at least with CATSPERD and is required for targeting the CatSper complex in the flagellar membrane.

The protein localises to the cell projection. Its subcellular location is the cilium. It is found in the flagellum membrane. Its function is as follows. Auxiliary component of the CatSper complex, a complex involved in sperm cell hyperactivation. This chain is Cation channel sperm-associated auxiliary subunit TMEM249, found in Mus musculus (Mouse).